Consider the following 293-residue polypeptide: Membrane protein RL13 (293 aa).

An N-terminal signal peptide occupies residues 1–19 (MHWHLAITWTVIILTFSEC). Residues 245 to 265 (IPLGIHAVWAGIVVSVALIAL) form a helical membrane-spanning segment.

The protein resides in the virion membrane. Functionally, may play a role in modifying tropism or in modulating cell signaling during virus entry. Since RL13 expression severely impairs HCMV replication in epithelial cell cultures, it may act as a regulator promoting persistence by suppressing the switch to fully lytic infection. The polypeptide is Membrane protein RL13 (RL13) (Human cytomegalovirus (strain Merlin) (HHV-5)).